A 530-amino-acid polypeptide reads, in one-letter code: Carbohydrate sulfotransferase 2 (530 aa).

Residues 1 to 54 (MSRSPQRALPPGALPRLLQAAPAAAPRALLPQWPRRPGRRWPASPLGMKVFRRK) are Cytoplasmic-facing. Residues 55–75 (ALVLCAGYALLLVLTMLNLLD) traverse the membrane as a helical; Signal-anchor for type II membrane protein segment. At 76–530 (YKWHKEPLQQ…SKTLLRKPRL (455 aa)) the chain is on the lumenal side. The tract at residues 89–119 (DGPLGAAAGAAGGSWGRPGPPPAGPPRAHAR) is disordered. 173–179 (WRSGSSF) is a binding site for 3'-phosphoadenylyl sulfate. Asn-243 is a glycosylation site (N-linked (GlcNAc...) asparagine). 332–340 (RDPRAVASS) is a binding site for 3'-phosphoadenylyl sulfate. N-linked (GlcNAc...) asparagine glycans are attached at residues Asn-457 and Asn-475.

It belongs to the sulfotransferase 1 family. Gal/GlcNAc/GalNAc subfamily. As to quaternary structure, homodimer; disulfide-linked. Homodimerization is not essential for enzyme activity. In terms of processing, glycosylation at Asn-475 is required for catalytic activity. Widely expressed. Highly expressed in bone marrow, peripheral blood leukocytes, spleen, brain, spinal cord, ovary and placenta. Expressed by high endothelial cells (HEVs) and leukocytes.

The protein resides in the golgi apparatus. The protein localises to the trans-Golgi network membrane. It carries out the reaction 3-O-{N-acetyl-beta-D-glucosaminyl-(1-&gt;3)-beta-D-galactosyl-(1-&gt;3)-N-acetyl-alpha-D-galactosaminyl}-L-threonyl-[protein] + 3'-phosphoadenylyl sulfate = 3-O-{6-O-sulfo-N-acetyl-beta-D-glucosaminyl-(1-&gt;3)-beta-D-galactosyl-(1-&gt;3)-N-acetyl-alpha-D-galactosaminyl}-L-threonyl-[protein] + adenosine 3',5'-bisphosphate + H(+). The enzyme catalyses 3-O-{N-acetyl-beta-D-glucosaminyl-(1-&gt;3)-beta-D-galactosyl-(1-&gt;3)-N-acetyl-alpha-D-galactosaminyl}-L-seryl-[protein] + 3'-phosphoadenylyl sulfate = 3-O-{6-O-sulfo-N-acetyl-beta-D-glucosaminyl-(1-&gt;3)-beta-D-galactosyl-(1-&gt;3)-N-acetyl-alpha-D-galactosaminyl}-L-seryl-[protein] + adenosine 3',5'-bisphosphate + H(+). The catalysed reaction is a 3-O-{beta-D-galactosyl-(1-&gt;3)-[N-acetyl-beta-D-glucosaminyl-(1-&gt;6)]-N-acetyl-alpha-D-galactosaminyl}-L-threonyl-[protein] + 3'-phosphoadenylyl sulfate = 3-O-{beta-D-galactosyl-(1-&gt;3)-[6-O-sulfo-N-acetyl-beta-D-glucosaminyl-(1-&gt;6)]-N-acetyl-alpha-D-galactosaminyl}-L-threonyl-[protein] + adenosine 3',5'-bisphosphate + H(+). It catalyses the reaction 3-O-{beta-D-galactosyl-(1-&gt;3)-[N-acetyl-beta-D-glucosaminyl-(1-&gt;6)]-N-acetyl-alpha-D-galactosaminyl}-L-seryl-[protein] + 3'-phosphoadenylyl sulfate = 3-O-{beta-D-galactosyl-(1-&gt;3)-[6-O-sulfo-N-acetyl-beta-D-glucosaminyl-(1-&gt;6)]-N-acetyl-alpha-D-galactosaminyl}-L-seryl-[protein] + adenosine 3',5'-bisphosphate + H(+). It functions in the pathway protein modification; carbohydrate sulfation. Its function is as follows. Sulfotransferase that utilizes 3'-phospho-5'-adenylyl sulfate (PAPS) as sulfonate donor to catalyze the transfer of sulfate to position 6 of non-reducing N-acetylglucosamine (GlcNAc) residues within keratan-like structures on N-linked glycans and within mucin-associated glycans that can ultimately serve as SELL ligands. SELL ligands are present in high endothelial cells (HEVs) and play a central role in lymphocyte homing at sites of inflammation. Participates in biosynthesis of the SELL ligand sialyl 6-sulfo Lewis X and in lymphocyte homing to Peyer patches. Has no activity toward O-linked sugars. Its substrate specificity may be influenced by its subcellular location. Sulfates GlcNAc residues at terminal, non-reducing ends of oligosaccharide chains. This is Carbohydrate sulfotransferase 2 (CHST2) from Homo sapiens (Human).